The primary structure comprises 85 residues: Large ribosomal subunit protein bL27 (85 aa).

Residues 1 to 22 (MAHKKGASSTRNGRDSNAQRLG) are disordered. The segment covering 7–19 (ASSTRNGRDSNAQ) has biased composition (polar residues).

This sequence belongs to the bacterial ribosomal protein bL27 family.

This Streptomyces griseus protein is Large ribosomal subunit protein bL27 (rpmA).